The chain runs to 703 residues: Elongation factor G 1 (703 aa).

One can recognise a tr-type G domain in the interval 8–290 (ERYRNIGISA…AVIDFLPSPV (283 aa)). GTP contacts are provided by residues 17–24 (AHIDAGKT), 88–92 (DTPGH), and 142–145 (NKMD).

The protein belongs to the TRAFAC class translation factor GTPase superfamily. Classic translation factor GTPase family. EF-G/EF-2 subfamily.

It is found in the cytoplasm. Catalyzes the GTP-dependent ribosomal translocation step during translation elongation. During this step, the ribosome changes from the pre-translocational (PRE) to the post-translocational (POST) state as the newly formed A-site-bound peptidyl-tRNA and P-site-bound deacylated tRNA move to the P and E sites, respectively. Catalyzes the coordinated movement of the two tRNA molecules, the mRNA and conformational changes in the ribosome. The protein is Elongation factor G 1 of Cupriavidus metallidurans (strain ATCC 43123 / DSM 2839 / NBRC 102507 / CH34) (Ralstonia metallidurans).